The sequence spans 379 residues: Cinnamyl alcohol dehydrogenase 7 (379 aa).

The span at 1–13 shows a compositional bias: low complexity; the sequence is MAPTTTATAAAEQ. The interval 1–21 is disordered; it reads MAPTTTATAAAEQAPPPQHTR. A Zn(2+)-binding site is contributed by Cys-60. Position 62 (Ser-62) interacts with NADP(+). Zn(2+) contacts are provided by His-82, Glu-83, Cys-113, Cys-116, Cys-119, Cys-127, and Cys-185. NADP(+) is bound by residues Thr-189, 210–215, 233–238, Thr-273, Gly-297, and 320–322; these read GLGGLG, STSPVK, and SCM.

Belongs to the zinc-containing alcohol dehydrogenase family. Homodimer. It depends on Zn(2+) as a cofactor. In terms of tissue distribution, expressed in roots, first internodes and panicles. Expressed in the vascular bundles and sclerenchyma cells below the epidermis in leaves and stems.

The catalysed reaction is (E)-cinnamyl alcohol + NADP(+) = (E)-cinnamaldehyde + NADPH + H(+). It catalyses the reaction (E)-coniferol + NADP(+) = (E)-coniferaldehyde + NADPH + H(+). It carries out the reaction (E)-sinapyl alcohol + NADP(+) = (E)-sinapaldehyde + NADPH + H(+). The enzyme catalyses (E)-4-coumaroyl alcohol + NADP(+) = (E)-4-coumaraldehyde + NADPH + H(+). The catalysed reaction is (E)-caffeyl alcohol + NADP(+) = (E)-caffeyl aldehyde + NADPH + H(+). Its pathway is aromatic compound metabolism; phenylpropanoid biosynthesis. In terms of biological role, involved in lignin biosynthesis. May catalyze the final step specific for the production of lignin monomers, like coniferyl alcohol, sinapyl alcohol and 4-coumaryl alcohol. The protein is Cinnamyl alcohol dehydrogenase 7 of Oryza sativa subsp. japonica (Rice).